Here is a 207-residue protein sequence, read N- to C-terminus: Transcriptional regulatory protein RcsA (207 aa).

The HTH luxR-type domain maps to leucine 131 to aspartate 196. Residues threonine 155–glycine 174 constitute a DNA-binding region (H-T-H motif).

The protein belongs to the RcsA family. In terms of assembly, interacts with RcsB.

In terms of biological role, component of the Rcs signaling system, which controls transcription of numerous genes. Binds, with RcsB, to the RcsAB box to regulate expression of genes. This is Transcriptional regulatory protein RcsA from Escherichia coli O157:H7.